The following is a 206-amino-acid chain: 2-phospho-L-lactate guanylyltransferase (206 aa).

Belongs to the CofC family. In terms of assembly, homodimer.

The enzyme catalyses (2S)-2-phospholactate + GTP + H(+) = (2S)-lactyl-2-diphospho-5'-guanosine + diphosphate. It functions in the pathway cofactor biosynthesis; coenzyme F420 biosynthesis. Functionally, guanylyltransferase that catalyzes the activation of (2S)-2-phospholactate (2-PL) as (2S)-lactyl-2-diphospho-5'-guanosine, via the condensation of 2-PL with GTP. It is involved in the biosynthesis of coenzyme F420, a hydride carrier cofactor. This chain is 2-phospho-L-lactate guanylyltransferase, found in Archaeoglobus fulgidus (strain ATCC 49558 / DSM 4304 / JCM 9628 / NBRC 100126 / VC-16).